Reading from the N-terminus, the 274-residue chain is Urease accessory protein UreD (274 aa).

Belongs to the UreD family. UreD, UreF and UreG form a complex that acts as a GTP-hydrolysis-dependent molecular chaperone, activating the urease apoprotein by helping to assemble the nickel containing metallocenter of UreC. The UreE protein probably delivers the nickel.

Its subcellular location is the cytoplasm. Its function is as follows. Required for maturation of urease via the functional incorporation of the urease nickel metallocenter. The protein is Urease accessory protein UreD of Thermosynechococcus vestitus (strain NIES-2133 / IAM M-273 / BP-1).